The primary structure comprises 329 residues: Serpentine receptor class alpha-4 (329 aa).

Helical transmembrane passes span isoleucine 25–valine 45, leucine 103–leucine 123, glycine 144–tryptophan 164, tyrosine 188–tryptophan 208, isoleucine 238–isoleucine 258, and leucine 273–phenylalanine 293.

It belongs to the nematode receptor-like protein sra family.

It is found in the membrane. This is Serpentine receptor class alpha-4 (sra-4) from Caenorhabditis elegans.